We begin with the raw amino-acid sequence, 354 residues long: 5,10-methenyltetrahydromethanopterin hydrogenase (354 aa).

Belongs to the HMD family.

The catalysed reaction is 5,10-methenyl-5,6,7,8-tetrahydromethanopterin + H2 = 5,10-methylenetetrahydromethanopterin + H(+). Its pathway is one-carbon metabolism; methanogenesis from CO(2); 5,10-methylene-5,6,7,8-tetrahydromethanopterin from 5,10-methenyl-5,6,7,8-tetrahydromethanopterin (hydrogen route): step 1/1. Functionally, catalyzes the reversible reduction of methenyl-H(4)MPT(+) to methylene-H(4)MPT. The protein is 5,10-methenyltetrahydromethanopterin hydrogenase of Methanococcus maripaludis (strain DSM 14266 / JCM 13030 / NBRC 101832 / S2 / LL).